Consider the following 219-residue polypeptide: Translation initiation factor IF-3 (219 aa).

The protein belongs to the IF-3 family. As to quaternary structure, monomer.

It is found in the cytoplasm. Its function is as follows. IF-3 binds to the 30S ribosomal subunit and shifts the equilibrium between 70S ribosomes and their 50S and 30S subunits in favor of the free subunits, thus enhancing the availability of 30S subunits on which protein synthesis initiation begins. In Prochlorococcus marinus (strain MIT 9303), this protein is Translation initiation factor IF-3.